Here is a 213-residue protein sequence, read N- to C-terminus: ATP phosphoribosyltransferase (213 aa).

This sequence belongs to the ATP phosphoribosyltransferase family. Short subfamily. Heteromultimer composed of HisG and HisZ subunits.

The protein localises to the cytoplasm. It carries out the reaction 1-(5-phospho-beta-D-ribosyl)-ATP + diphosphate = 5-phospho-alpha-D-ribose 1-diphosphate + ATP. Its pathway is amino-acid biosynthesis; L-histidine biosynthesis; L-histidine from 5-phospho-alpha-D-ribose 1-diphosphate: step 1/9. In terms of biological role, catalyzes the condensation of ATP and 5-phosphoribose 1-diphosphate to form N'-(5'-phosphoribosyl)-ATP (PR-ATP). Has a crucial role in the pathway because the rate of histidine biosynthesis seems to be controlled primarily by regulation of HisG enzymatic activity. This Chromobacterium violaceum (strain ATCC 12472 / DSM 30191 / JCM 1249 / CCUG 213 / NBRC 12614 / NCIMB 9131 / NCTC 9757 / MK) protein is ATP phosphoribosyltransferase.